Here is a 250-residue protein sequence, read N- to C-terminus: Leucyl/phenylalanyl-tRNA--protein transferase (250 aa).

The protein belongs to the L/F-transferase family.

It localises to the cytoplasm. The enzyme catalyses N-terminal L-lysyl-[protein] + L-leucyl-tRNA(Leu) = N-terminal L-leucyl-L-lysyl-[protein] + tRNA(Leu) + H(+). It carries out the reaction N-terminal L-arginyl-[protein] + L-leucyl-tRNA(Leu) = N-terminal L-leucyl-L-arginyl-[protein] + tRNA(Leu) + H(+). The catalysed reaction is L-phenylalanyl-tRNA(Phe) + an N-terminal L-alpha-aminoacyl-[protein] = an N-terminal L-phenylalanyl-L-alpha-aminoacyl-[protein] + tRNA(Phe). Functionally, functions in the N-end rule pathway of protein degradation where it conjugates Leu, Phe and, less efficiently, Met from aminoacyl-tRNAs to the N-termini of proteins containing an N-terminal arginine or lysine. In Cupriavidus necator (strain ATCC 17699 / DSM 428 / KCTC 22496 / NCIMB 10442 / H16 / Stanier 337) (Ralstonia eutropha), this protein is Leucyl/phenylalanyl-tRNA--protein transferase.